Consider the following 736-residue polypeptide: Polyribonucleotide nucleotidyltransferase (736 aa).

Positions 493 and 499 each coordinate Mg(2+). Residues 560 to 619 (PQHAELVVNPDAIRMIIGPGGKNIKQITTVTGAAIDINDSGKISIFAPTSEAMEQAKQMI) form the KH domain. The S1 motif domain maps to 629-703 (GKNYKGKVRK…SRKAVLLEEE (75 aa)). Residues 710–736 (EESSRFSKGNRNGDRSRHNNRERTRRT) form a disordered region. Residues 720 to 736 (RNGDRSRHNNRERTRRT) are compositionally biased toward basic and acidic residues.

It belongs to the polyribonucleotide nucleotidyltransferase family. It depends on Mg(2+) as a cofactor.

Its subcellular location is the cytoplasm. The catalysed reaction is RNA(n+1) + phosphate = RNA(n) + a ribonucleoside 5'-diphosphate. In terms of biological role, involved in mRNA degradation. Catalyzes the phosphorolysis of single-stranded polyribonucleotides processively in the 3'- to 5'-direction. The polypeptide is Polyribonucleotide nucleotidyltransferase (Lawsonia intracellularis (strain PHE/MN1-00)).